The chain runs to 323 residues: CD-NTase-associated protein 12 (323 aa).

The region spanning 4–120 (RIFIGSSSEQ…LDGITVAKFT (117 aa)) is the TIR domain. Residue Glu-84 is part of the active site. The STING domain stretch occupies residues 154-323 (STALAIGYYN…YVNVLTNVKL (170 aa)). Ser-164, Phe-165, Arg-234, Pro-237, Asp-259, Ser-262, and Thr-263 together coordinate 3',3'-c-di-GMP.

It in the C-terminal section; belongs to the bacterial STING family. Forms homodimers which subsequently form filaments. In vitro in the presence of c-di-GMP forms filaments up to 300 nm in length with an ordered array of parallel-stacked subunits, where the TIR domains form one face of the filament and the STING domains form the other face. Antiparallel double-filament structures are also seen. 3'3'-cGAMP weakly induces filament formation, while 2'3'-cGAMP does not.

It catalyses the reaction NAD(+) + H2O = ADP-D-ribose + nicotinamide + H(+). NAD(+) hydrolase activity is strongly stimulated by c-di-GMP, weakly by 3'3'-cGAMP, very weakly by c-di-AMP and not at all by 2'3'-cGAMP. Self-association of TIR domains is required for NADase activity. Functionally, effector protein of a CBASS antiviral system with NAD(+) hydrolase activity. CBASS (cyclic oligonucleotide-based antiphage signaling system) provides immunity against bacteriophage. The CD-NTase protein synthesizes cyclic nucleotides in response to infection; these serve as specific second messenger signals. The signals activate a diverse range of effectors, leading to bacterial cell death and thus abortive phage infection. A type I-D(GG) CBASS system. Upon activation by 3'3'-c-di-GMP forms filaments which hydrolyze NAD(+); filament formation is required for enzyme activation. Induction in an E.coli strain that synthesizes c-di-GMP leads to significant growth inhibition. Binds c-di-GMP and 3'3'-cGAMP (3'3'-cyclic GMP-AMP), but not c-di-AMP, 2'3'-cGAMP or cUMP-AMP. The protein is CD-NTase-associated protein 12 of Sphingobacterium faecium (strain DSM 11690 / JCM 21820 / NBRC 15299 / NCIMB 13408 / KS 0470).